Reading from the N-terminus, the 131-residue chain is Large ribosomal subunit protein bL17 (131 aa).

The protein belongs to the bacterial ribosomal protein bL17 family. As to quaternary structure, part of the 50S ribosomal subunit. Contacts protein L32.

This Bordetella parapertussis (strain 12822 / ATCC BAA-587 / NCTC 13253) protein is Large ribosomal subunit protein bL17.